Here is a 171-residue protein sequence, read N- to C-terminus: S-ribosylhomocysteine lyase (171 aa).

Fe cation is bound by residues H54, H58, and C128.

It belongs to the LuxS family. In terms of assembly, homodimer. Fe cation serves as cofactor.

The catalysed reaction is S-(5-deoxy-D-ribos-5-yl)-L-homocysteine = (S)-4,5-dihydroxypentane-2,3-dione + L-homocysteine. Its function is as follows. Involved in the synthesis of autoinducer 2 (AI-2) which is secreted by bacteria and is used to communicate both the cell density and the metabolic potential of the environment. The regulation of gene expression in response to changes in cell density is called quorum sensing. Catalyzes the transformation of S-ribosylhomocysteine (RHC) to homocysteine (HC) and 4,5-dihydroxy-2,3-pentadione (DPD). This is S-ribosylhomocysteine lyase from Shigella boydii serotype 4 (strain Sb227).